The following is a 314-amino-acid chain: 4-diphosphocytidyl-2-C-methyl-D-erythritol kinase (314 aa).

The active site involves lysine 11. Residue proline 95–threonine 105 participates in ATP binding. Residue aspartate 137 is part of the active site.

The protein belongs to the GHMP kinase family. IspE subfamily.

The catalysed reaction is 4-CDP-2-C-methyl-D-erythritol + ATP = 4-CDP-2-C-methyl-D-erythritol 2-phosphate + ADP + H(+). It participates in isoprenoid biosynthesis; isopentenyl diphosphate biosynthesis via DXP pathway; isopentenyl diphosphate from 1-deoxy-D-xylulose 5-phosphate: step 3/6. In terms of biological role, catalyzes the phosphorylation of the position 2 hydroxy group of 4-diphosphocytidyl-2C-methyl-D-erythritol. The protein is 4-diphosphocytidyl-2-C-methyl-D-erythritol kinase of Synechococcus elongatus (strain ATCC 33912 / PCC 7942 / FACHB-805) (Anacystis nidulans R2).